Reading from the N-terminus, the 152-residue chain is Natriuretic peptides A (152 aa).

An N-terminal signal peptide occupies residues 1 to 24; sequence MGSSAITTSFLLFVAFQLPGQTGA. 2 propeptides span residues 25–122 and 92–102; these read NPVY…TAPR and EMGAPSDGDPG. The interval 50–108 is disordered; it reads MPLEDEAVPSQVLSEQNEEAGAPLSPLSEVPPWDGGRSTQPREMGAPSDGDPGNPPRSV. Ser-128 bears the Phosphoserine mark. Cys-129 and Cys-145 form a disulfide bridge. Residues 146–150 form an important for degradation of atrial natriuretic peptide by IDE region; the sequence is NSFRY.

It belongs to the natriuretic peptide family. Homodimer; disulfide-linked antiparallel dimer. Post-translationally, the precursor molecule is proteolytically cleaved by CORIN at Arg-122 to produce the atrial natriuretic peptide. Undergoes further proteolytic cleavage by unknown proteases to give rise to long-acting natriuretic peptide, vessel dilator and kaliuretic peptide. Additional processing gives rise to the auriculin and atriopeptin peptides. In the kidneys, alternative processing by an unknown protease results in the peptide urodilatin. Cleavage by MME initiates degradation of the factor and thereby regulates its activity. Degradation by IDE results in reduced activation of NPR1 (in vitro). During IDE degradation, the resulting products can temporarily stimulate NPR2 to produce cGMP, before the fragments are completely degraded and inactivated by IDE (in vitro). In terms of processing, degraded by IDE. Post-translationally, phosphorylation on Ser-128 decreases vasorelaxant activity.

It localises to the secreted. The protein resides in the perikaryon. Its subcellular location is the cell projection. Functionally, hormone that plays a key role in mediating cardio-renal homeostasis, and is involved in vascular remodeling and regulating energy metabolism. Acts by specifically binding and stimulating NPR1 to produce cGMP, which in turn activates effector proteins, such as PRKG1, that drive various biological responses. Regulates vasodilation, natriuresis, diuresis and aldosterone synthesis and is therefore essential for regulating blood pressure, controlling the extracellular fluid volume and maintaining the fluid-electrolyte balance. Also involved in inhibiting cardiac remodeling and cardiac hypertrophy by inducing cardiomyocyte apoptosis and attenuating the growth of cardiomyocytes and fibroblasts. Plays a role in female pregnancy by promoting trophoblast invasion and spiral artery remodeling in uterus, and thus prevents pregnancy-induced hypertension. In adipose tissue, acts in various cGMP- and PKG-dependent pathways to regulate lipid metabolism and energy homeostasis. This includes up-regulating lipid metabolism and mitochondrial oxygen utilization by activating the AMP-activated protein kinase (AMPK), and increasing energy expenditure by acting via MAPK11 to promote the UCP1-dependent thermogenesis of brown adipose tissue. Binds the clearance receptor NPR3 which removes the hormone from circulation. May have a role in cardio-renal homeostasis through regulation of natriuresis, diuresis, vasodilation, and inhibiting aldosterone synthesis. In vitro, promotes the production of cGMP and induces vasodilation. May promote natriuresis, at least in part, by enhancing prostaglandin E2 synthesis resulting in the inhibition of renal Na+-K+-ATPase. However reports on the involvement of this peptide in mammal blood volume and blood pressure homeostasis are conflicting; according to a report, in vivo it is not sufficient to activate cGMP and does not inhibit collecting duct transport nor effect diuresis and natriuresis. Appears to bind to specific receptors that are distinct from the receptors bound by atrial natriuretic peptide and vessel dilator. Possibly enhances protein excretion in urine by decreasing proximal tubular protein reabsorption. In terms of biological role, may have a role in cardio-renal homeostasis through regulation of natriuresis, diuresis, and vasodilation. In vitro, promotes the production of cGMP and induces vasodilation. May promote natriuresis, at least in part, by enhancing prostaglandin E2 synthesis resulting in the inhibition of renal Na+-K+-ATPase. However reports on the involvement of this peptide in mammal blood volume and blood pressure homeostasis are conflicting; according to a report it is not sufficient to activate cGMP and does not inhibit collecting duct transport nor effect diuresis and natriuresis. Appears to bind to specific receptors that are distinct from the receptors bound by the atrial natriuretic and long-acting natriuretic peptides. Possibly functions in protein excretion in urine by maintaining the integrity of the proximal tubules and enhancing protein excretion by decreasing proximal tubular protein reabsorption. Its function is as follows. May have a role in cardio-renal homeostasis through regulation of diuresis and inhibiting aldosterone synthesis. In vitro, promotes the production of cGMP and induces vasodilation. May promote natriuresis, at least in part, by enhancing prostaglandin E2 synthesis resulting in the inhibition of renal Na+-K+-ATPase. May have a role in potassium excretion but not sodium excretion (natriuresis). Possibly enhances protein excretion in urine by decreasing proximal tubular protein reabsorption. Functionally, hormone produced in the kidneys that appears to be important for maintaining cardio-renal homeostasis. Mediates vasodilation, natriuresis and diuresis primarily in the renal system, in order to maintain the extracellular fluid volume and control the fluid-electrolyte balance. Specifically binds and stimulates cGMP production by renal transmembrane receptors, likely NPR1. Urodilatin not ANP, may be the natriuretic peptide responsible for the regulation of sodium and water homeostasis in the kidney. May have a role in cardio-renal homeostasis through regulation of natriuresis and vasodilation. In vivo promotes natriuresis and in vitro, vasodilates renal artery strips. In terms of biological role, may have a role in cardio-renal homeostasis through regulation of regulation of natriuresis and vasodilation. In vivo promotes natriuresis. In vitro, vasodilates intestinal smooth muscle but not smooth muscle strips. Its function is as follows. May have a role in cardio-renal homeostasis through regulation of natriuresis and vasodilation. In vivo promotes natriuresis. In vitro, selectively vasodilates intestinal and vascular smooth muscle strips. Functionally, may have a role in cardio-renal homeostasis through regulation of natriuresis and vasodilation. In vivo promotes natriuresis. In vitro, selectively vasodilates intestinal smooth muscle but not vascular smooth muscle strips. In Ovis aries (Sheep), this protein is Natriuretic peptides A (NPPA).